The chain runs to 533 residues: Subtilisin-like serine protease pepC (533 aa).

The signal sequence occupies residues 1–16; that stretch reads MKGILGLSLLPLLTAA. The Inhibitor I9 domain maps to 43-136; that stretch reads SYIVVFKKHV…IERDSEVHTM (94 aa). One can recognise a Peptidase S8 domain in the interval 145 to 450; the sequence is PWGLARISHR…VGIYKRNELT (306 aa). Catalysis depends on charge relay system residues aspartate 181 and histidine 213. The N-linked (GlcNAc...) asparagine glycan is linked to asparagine 283. Cysteine 320 and cysteine 351 form a disulfide bridge. The active-site Charge relay system is serine 379. Asparagine 435 is a glycosylation site (N-linked (GlcNAc...) asparagine). Polar residues predominate over residues 496–513; it reads KSCSPRSLVPSTARSRMP. The tract at residues 496–519 is disordered; the sequence is KSCSPRSLVPSTARSRMPSSHRSE.

This sequence belongs to the peptidase S8 family.

The sequence is that of Subtilisin-like serine protease pepC (pepC) from Aspergillus niger.